Here is a 1770-residue protein sequence, read N- to C-terminus: Transposon Ty2-DR2 Gag-Pol polyprotein (1770 aa).

Composition is skewed to polar residues over residues 1 to 39 (MESQ…SASN) and 49 to 60 (KVNSQEETTPGT). 2 disordered regions span residues 1-89 (MESQ…QQHG) and 360-449 (HSEY…SNDE). The interval 295 to 397 (ENNINVSDRL…SSKPRAAKAH (103 aa)) is RNA-binding. Positions 369–381 (TSPNTTNTKVTTR) are enriched in low complexity. Polar residues-rich tracts occupy residues 399-408 (IATSSKFSRV) and 415-435 (ESTV…GQQQ). D457 serves as the catalytic For protease activity; shared with dimeric partner. Residues 579–636 (NVNKSKSVNKYPYPLIHRMLGHANFRSIQKSLKKNAVTYLKESDIEWSNASTYQCPDC) form an integrase-type zinc finger-like region. The Integrase catalytic domain occupies 656-831 (ESYEPFQYLH…AGLDITTILP (176 aa)). Positions 667 and 732 each coordinate Mg(2+). Disordered stretches follow at residues 1005-1038 (GGTI…MIDL), 1059-1135 (TEEP…KSSK), and 1171-1222 (SRQT…LEPP). Composition is skewed to polar residues over residues 1009–1024 (ESDT…FTAR) and 1065–1082 (QRNS…STPS). The short motif at 1193 to 1227 (KKRSLEDNETEIEVSRDTWNNKNMRSLEPPRSKKR) is the Bipartite nuclear localization signal element. The Reverse transcriptase Ty1/copia-type domain occupies 1353-1491 (NDYYITQLDI…DILGLEIKYQ (139 aa)). Residues D1361, D1442, D1443, D1625, E1667, and D1700 each coordinate Mg(2+). In terms of domain architecture, RNase H Ty1/copia-type spans 1625-1767 (DASYGNQPYY…IKTFKLLTNK (143 aa)).

The capsid protein forms a homotrimer, from which the VLPs are assembled. The protease is a homodimer, whose active site consists of two apposed aspartic acid residues. In terms of processing, initially, virus-like particles (VLPs) are composed of the structural unprocessed proteins Gag and Gag-Pol, and also contain the host initiator methionine tRNA (tRNA(i)-Met) which serves as a primer for minus-strand DNA synthesis, and a dimer of genomic Ty RNA. Processing of the polyproteins occurs within the particle and proceeds by an ordered pathway, called maturation. First, the protease (PR) is released by autocatalytic cleavage of the Gag-Pol polyprotein, and this cleavage is a prerequisite for subsequent processing at the remaining sites to release the mature structural and catalytic proteins. Maturation takes place prior to the RT reaction and is required to produce transposition-competent VLPs.

It localises to the cytoplasm. Its subcellular location is the nucleus. It catalyses the reaction DNA(n) + a 2'-deoxyribonucleoside 5'-triphosphate = DNA(n+1) + diphosphate. The catalysed reaction is Endonucleolytic cleavage to 5'-phosphomonoester.. Functionally, capsid protein (CA) is the structural component of the virus-like particle (VLP), forming the shell that encapsulates the retrotransposons dimeric RNA genome. The particles are assembled from trimer-clustered units and there are holes in the capsid shells that allow for the diffusion of macromolecules. CA also has nucleocapsid-like chaperone activity, promoting primer tRNA(i)-Met annealing to the multipartite primer-binding site (PBS), dimerization of Ty2 RNA and initiation of reverse transcription. The aspartyl protease (PR) mediates the proteolytic cleavages of the Gag and Gag-Pol polyproteins after assembly of the VLP. Its function is as follows. Reverse transcriptase/ribonuclease H (RT) is a multifunctional enzyme that catalyzes the conversion of the retro-elements RNA genome into dsDNA within the VLP. The enzyme displays a DNA polymerase activity that can copy either DNA or RNA templates, and a ribonuclease H (RNase H) activity that cleaves the RNA strand of RNA-DNA heteroduplexes during plus-strand synthesis and hydrolyzes RNA primers. The conversion leads to a linear dsDNA copy of the retrotransposon that includes long terminal repeats (LTRs) at both ends. In terms of biological role, integrase (IN) targets the VLP to the nucleus, where a subparticle preintegration complex (PIC) containing at least integrase and the newly synthesized dsDNA copy of the retrotransposon must transit the nuclear membrane. Once in the nucleus, integrase performs the integration of the dsDNA into the host genome. The sequence is that of Transposon Ty2-DR2 Gag-Pol polyprotein (TY2B-DR2) from Saccharomyces cerevisiae (strain ATCC 204508 / S288c) (Baker's yeast).